A 213-amino-acid polypeptide reads, in one-letter code: Protein GET1 (213 aa).

The Lumenal portion of the chain corresponds to 1 to 4; that stretch reads MPSL. Residues 5-24 form a helical membrane-spanning segment; it reads LLVVFILQFLLHIINTVGAS. Residues 25-110 are Cytoplasmic-facing; that stretch reads TVNDLLWILY…AFTSAVSTLR (86 aa). Positions 41–68 form a coiled coil; it reads TSSSAQKAQKLKKEIVQLKRELGATSAQ. A helical membrane pass occupies residues 111 to 131; it reads WLGTQGLRFVLQFWFAKSPMF. Residues 132–155 are Lumenal-facing; the sequence is WMPAGWLPFYVEWILSFPRAPLGS. A helical membrane pass occupies residues 156–172; sequence VSINVWGIACASMIALA. Over 173 to 213 the chain is Cytoplasmic; it reads AEGLAAVWVLATKRPTPIATEKKEAMAFAADQKSSGEKKEL.

Belongs to the WRB/GET1 family. In terms of assembly, interacts with GET3.

It is found in the endoplasmic reticulum membrane. In terms of biological role, required for the post-translational delivery of tail-anchored (TA) proteins to the endoplasmic reticulum. Acts as a membrane receptor for soluble GET3, which recognizes and selectively binds the transmembrane domain of TA proteins in the cytosol. The polypeptide is Protein GET1 (Phaeosphaeria nodorum (strain SN15 / ATCC MYA-4574 / FGSC 10173) (Glume blotch fungus)).